The following is a 436-amino-acid chain: UPF0597 protein YhaM (436 aa).

This sequence belongs to the UPF0597 family.

This Escherichia coli (strain 55989 / EAEC) protein is UPF0597 protein YhaM.